The following is a 258-amino-acid chain: Small ribosomal subunit protein mS35 (258 aa).

A mitochondrion-targeting transit peptide spans 1–39 (MAFNPLLSLLKADAIFLGQLSKSSFCATSRAFSVFYFTR).

It belongs to the mitochondrion-specific ribosomal protein mS35 family. Component of the mitochondrial small ribosomal subunit (mt-SSU). Mature yeast 74S mitochondrial ribosomes consist of a small (37S) and a large (54S) subunit. The 37S small subunit contains a 15S ribosomal RNA (15S mt-rRNA) and at least 32 different proteins. The 54S large subunit contains a 21S rRNA (21S mt-rRNA) and at least 45 different proteins.

Its subcellular location is the mitochondrion. Functionally, component of the mitochondrial ribosome (mitoribosome), a dedicated translation machinery responsible for the synthesis of mitochondrial genome-encoded proteins, including at least some of the essential transmembrane subunits of the mitochondrial respiratory chain. The mitoribosomes are attached to the mitochondrial inner membrane and translation products are cotranslationally integrated into the membrane. This is Small ribosomal subunit protein mS35 (rsm24) from Schizosaccharomyces pombe (strain 972 / ATCC 24843) (Fission yeast).